A 381-amino-acid polypeptide reads, in one-letter code: N-acetyl-alpha-D-glucosaminyl L-malate synthase (381 aa).

(S)-malate is bound by residues Ser-16, Tyr-94, and Thr-122. UDP-binding residues include Asn-206, Gln-262, and Glu-290.

Belongs to the glycosyltransferase group 1 family. Glycosyltransferase 4 subfamily. As to quaternary structure, dimer of tetramers.

The enzyme catalyses (S)-malate + UDP-N-acetyl-alpha-D-glucosamine = (S)-malyl N-acetyl-alpha-D-glucosaminide + UDP + H(+). Its function is as follows. Involved in bacillithiol (BSH) biosynthesis. Catalyzes the first step of the pathway, the formation of N-acetylglucosaminylmalate (GlcNAc-Mal) from UDP-N-acetylglucosamine (UDP-GlcNAc) and L-malate. In Bacillus anthracis, this protein is N-acetyl-alpha-D-glucosaminyl L-malate synthase.